A 176-amino-acid polypeptide reads, in one-letter code: MIDKRRTTRDLPQINERIRFPEIRVIDSDGSQLGIITPAEALRVAEEKELDLVLVSETASPPVCRIMDYGKYKFEQEKKAREAKKKQHTADIKEVKMRYKIDEHDYNVRVNQAQRFLKAGDKVKATITFRGREIQHSNLAEELLARMAKDLQDVAEVQQAPKKEGRNMMMMLSPKK.

Belongs to the IF-3 family. Monomer.

It is found in the cytoplasm. Its function is as follows. IF-3 binds to the 30S ribosomal subunit and shifts the equilibrium between 70S ribosomes and their 50S and 30S subunits in favor of the free subunits, thus enhancing the availability of 30S subunits on which protein synthesis initiation begins. This is Translation initiation factor IF-3 from Microcystis aeruginosa (strain NIES-843 / IAM M-2473).